The sequence spans 567 residues: MIMYIIWALLFIPVSAQQWTLFDEQAKPKREGRVRLVGGLPSSGRVEVYHDGQWGTVCDDGWDLAEAQVVCRQLGFPGAVSVASGGQYGEGSGPIWLDDMNCKGSESILSECCFKGWGVNDCTHQEDAGVVCDTGTNATNIRQISVDNSLGLSDDLGLLFDSEDGCDFIIAVQDLGEEAELTLCVHRVILMMYPELNITNDTRNLTVDVSQTCQSHVSALIRYLYTRQIDVSATSAQCLYQLAFIFGVQRLMEDVGRVFTALIPEDNTFQTPVSMYEYGLRTGDLVLQENVLQYLSWNCEFLISSPVWSTVSFEMMDALLQRSDLIVKDEAVLLEALERWIQDKGDQISSDKQASLLSHIRFLLIPVDKLYDIQFSSSALYQNNEKLYLTGLLRGFEFNALPFSKIRNQIDNASSEYLPRIYTGDEWSVFINDTTVSSPYYNYNYYGQSNRIQTFFTSAHPSALYKDQKVQWQAQVFLTLQECSNYGVSCNTLPVARFYGYSNQYSYSNIISYNNRLILTCKNQNNVFHVQEFKNDVAVIPTNSSMGLPNPCPDDYSFRFVVRPQYI.

Residues 1–16 (MIMYIIWALLFIPVSA) form the signal peptide. One can recognise an SRCR domain in the interval 34–133 (VRLVGGLPSS…HQEDAGVVCD (100 aa)). Disulfide bonds link cysteine 58/cysteine 122, cysteine 71/cysteine 132, and cysteine 102/cysteine 112. Asparagine 137, asparagine 197, asparagine 200, and asparagine 204 each carry an N-linked (GlcNAc...) asparagine glycan. The BACK domain occupies 272–374 (PVSMYEYGLR…IPVDKLYDIQ (103 aa)). N-linked (GlcNAc...) asparagine glycosylation is found at asparagine 412, asparagine 432, and asparagine 543.

It is found in the secreted. It localises to the extracellular space. The protein localises to the extracellular matrix. Functionally, promotes integrin-mediated cell adhesion. The sequence is that of Galectin-3-binding protein A (lgals3bpa) from Danio rerio (Zebrafish).